The sequence spans 278 residues: 2-succinyl-6-hydroxy-2,4-cyclohexadiene-1-carboxylate synthase (278 aa).

The protein belongs to the AB hydrolase superfamily. MenH family. As to quaternary structure, monomer.

It carries out the reaction 5-enolpyruvoyl-6-hydroxy-2-succinyl-cyclohex-3-ene-1-carboxylate = (1R,6R)-6-hydroxy-2-succinyl-cyclohexa-2,4-diene-1-carboxylate + pyruvate. Its pathway is quinol/quinone metabolism; 1,4-dihydroxy-2-naphthoate biosynthesis; 1,4-dihydroxy-2-naphthoate from chorismate: step 3/7. It participates in quinol/quinone metabolism; menaquinone biosynthesis. Its function is as follows. Catalyzes a proton abstraction reaction that results in 2,5-elimination of pyruvate from 2-succinyl-5-enolpyruvyl-6-hydroxy-3-cyclohexene-1-carboxylate (SEPHCHC) and the formation of 2-succinyl-6-hydroxy-2,4-cyclohexadiene-1-carboxylate (SHCHC). The protein is 2-succinyl-6-hydroxy-2,4-cyclohexadiene-1-carboxylate synthase of Photorhabdus laumondii subsp. laumondii (strain DSM 15139 / CIP 105565 / TT01) (Photorhabdus luminescens subsp. laumondii).